Consider the following 363-residue polypeptide: uncharacterized protein (363 aa).

The next 4 helical transmembrane spans lie at 34 to 54 (YVYDIALIAISILCIVSIILW), 60 to 80 (LALFAIAPALAIGALGVTLLV), 91 to 111 (EIADTVAAVSLPFILTGTAAG), and 112 to 132 (LMFSAIAVGGGAVILANPLFL). Positions 232 to 245 (SSTTTHSTDSEQIL) are enriched in polar residues. Residues 232–363 (SSTTTHSTDS…SSQKKKPSRK (132 aa)) are disordered. Composition is skewed to low complexity over residues 246 to 268 (TSVSPQSSDTESSSSSSFHTPPN) and 275 to 285 (DSNSSDSSSSS). Basic and acidic residues predominate over residues 322–342 (SRSERNAQHHRNKDQEQRQDS).

It belongs to the chlamydial CPn_0443/CT_005/TC_0273 family.

It localises to the cell membrane. This is an uncharacterized protein from Chlamydia trachomatis serovar D (strain ATCC VR-885 / DSM 19411 / UW-3/Cx).